The following is a 125-amino-acid chain: Small ribosomal subunit protein uS13 (125 aa).

The tract at residues 91-125 (HRRGLPARGQRTRTNARTRKGKRKTVAGKKKAGKK) is disordered.

The protein belongs to the universal ribosomal protein uS13 family. In terms of assembly, part of the 30S ribosomal subunit. Forms a loose heterodimer with protein S19. Forms two bridges to the 50S subunit in the 70S ribosome.

Functionally, located at the top of the head of the 30S subunit, it contacts several helices of the 16S rRNA. In the 70S ribosome it contacts the 23S rRNA (bridge B1a) and protein L5 of the 50S subunit (bridge B1b), connecting the 2 subunits; these bridges are implicated in subunit movement. Contacts the tRNAs in the A and P-sites. This Chloroherpeton thalassium (strain ATCC 35110 / GB-78) protein is Small ribosomal subunit protein uS13.